Reading from the N-terminus, the 471-residue chain is Chromosomal replication initiator protein DnaA (471 aa).

Positions 1–77 (MELNSSFWTL…YTEISDTYGK (77 aa)) are domain I, interacts with DnaA modulators. Residues 77 to 130 (KPFEVEFSITGNKINSHIETSTTPDEVLSGSEILQAQLARAQNIQPTQPRSSSD) form a domain II region. The segment at 131 to 349 (TLNSELTFST…GNLKKVKMFS (219 aa)) is domain III, AAA+ region. G176, G178, K179, and T180 together coordinate ATP. Residues 350 to 471 (ELQGLPIDHE…EQRIHNITRV (122 aa)) are domain IV, binds dsDNA.

The protein belongs to the DnaA family. In terms of assembly, oligomerizes as a right-handed, spiral filament on DNA at oriC.

The protein localises to the cytoplasm. Its function is as follows. Plays an essential role in the initiation and regulation of chromosomal replication. ATP-DnaA binds to the origin of replication (oriC) to initiate formation of the DNA replication initiation complex once per cell cycle. Binds the DnaA box (a 9 base pair repeat at the origin) and separates the double-stranded (ds)DNA. Forms a right-handed helical filament on oriC DNA; dsDNA binds to the exterior of the filament while single-stranded (ss)DNA is stabiized in the filament's interior. The ATP-DnaA-oriC complex binds and stabilizes one strand of the AT-rich DNA unwinding element (DUE), permitting loading of DNA polymerase. After initiation quickly degrades to an ADP-DnaA complex that is not apt for DNA replication. Binds acidic phospholipids. The chain is Chromosomal replication initiator protein DnaA from Bdellovibrio bacteriovorus (strain ATCC 15356 / DSM 50701 / NCIMB 9529 / HD100).